Here is a 257-residue protein sequence, read N- to C-terminus: Outer membrane protein Omp26La (257 aa).

The signal sequence occupies residues 1–19 (MKKIALFITASLIAGNTLA).

The protein belongs to the MipA/OmpV family.

The protein resides in the cell outer membrane. This chain is Outer membrane protein Omp26La, found in Vibrio anguillarum (Listonella anguillarum).